Reading from the N-terminus, the 71-residue chain is UPF0435 protein BLi00816/BL03111 (71 aa).

The protein belongs to the UPF0435 family.

The chain is UPF0435 protein BLi00816/BL03111 from Bacillus licheniformis (strain ATCC 14580 / DSM 13 / JCM 2505 / CCUG 7422 / NBRC 12200 / NCIMB 9375 / NCTC 10341 / NRRL NRS-1264 / Gibson 46).